The chain runs to 228 residues: Cytidylate kinase (228 aa).

17–25 is a binding site for ATP; the sequence is GPTASGKGT.

This sequence belongs to the cytidylate kinase family. Type 1 subfamily.

The protein localises to the cytoplasm. The catalysed reaction is CMP + ATP = CDP + ADP. The enzyme catalyses dCMP + ATP = dCDP + ADP. The chain is Cytidylate kinase from Burkholderia thailandensis (strain ATCC 700388 / DSM 13276 / CCUG 48851 / CIP 106301 / E264).